A 492-amino-acid polypeptide reads, in one-letter code: Nuclear autoantigenic sperm protein homolog (492 aa).

Residues 1-14 (MSAEAEAIVTTATA) show a composition bias toward low complexity. 2 disordered regions span residues 1–52 (MSAE…EQER) and 123–254 (DVPD…EEGV). Residues T32 and T33 each carry the phosphothreonine modification. A compositionally biased stretch (acidic residues) spans 124–145 (VPDEAADDDDEDVDDDEEESAE). Composition is skewed to basic and acidic residues over residues 147-159 (GAAK…DTKE) and 170-179 (KELDTIKEGS). Phosphoserine occurs at positions 179 and 184. A Phosphothreonine modification is found at T185. The residue at position 193 (S193) is a Phosphoserine. The segment covering 226 to 238 (STSNGEVTASCSN) has biased composition (polar residues). The span at 244-253 (VEEEPEEEEG) shows a compositional bias: acidic residues. TPR repeat units follow at residues 284–317 (AEVQ…HGEL) and 326–359 (AELH…IEEE). A coiled-coil region spans residues 377–400 (MLDLEETKQEILAKIQEIEEMQAQ). The span at 418–459 (SGDAAAASSSSSSSANGAASSSSSSSKGAAAASSSTISSSSA) shows a compositional bias: low complexity. Residues 418 to 492 (SGDAAAASSS…LCSPAKRAAV (75 aa)) form a disordered region. A phosphoserine mark is found at S478 and S485.

It belongs to the NASP family. In terms of assembly, interacts with the histone H3-H4 heterodimer; the interaction with H4 is probably indirect and mediated by H3 (His3, His3.3A and His3.3B). Interacts with His2Av; this interaction directly or indirectly destabilizes His2Av.

The protein resides in the cytoplasm. The protein localises to the nucleus. It localises to the perinuclear region. Component of the histone chaperone network. Binds and stabilizes histone H3-H4 not bound to chromatin to maintain a soluble reservoir and modulate degradation by chaperone-mediated autophagy. May also bind and stabilize monomeric H3. Maternal effect gene essential for early embryogenesis. This is Nuclear autoantigenic sperm protein homolog from Drosophila melanogaster (Fruit fly).